Reading from the N-terminus, the 452-residue chain is Zinc finger protein 277 (452 aa).

The segment at 200 to 224 adopts a C2H2-type 1 zinc-finger fold; it reads LMCLYCEKIFRDRPTLKEHMRKKGH. A disordered region spans residues 248–271; it reads APTPRKQHLQKRRRETASVSTVAD. The span at 252–261 shows a compositional bias: basic residues; sequence RKQHLQKRRR. The segment at 361–385 adopts a C2H2-type 2 zinc-finger fold; it reads LRCVTCDLQFDEEELLVEHMAQESH.

The protein belongs to the ZNF277 family. Interacts with components of the origin recognition complex (ORC) complex, Orc2 and Orc3, components of the SAGA transcription coactivator-HAT complex, Gcn5 and e(y)2, components of the mRNP biogenesis THO complex, thoc5 and e(y)2, and a component of the TFIID complex, TBP. Also interacts with polybromo, a component of the chromatin remodeling SWI/SNF complex.

The protein localises to the nucleus. The protein resides in the cytoplasm. Its function is as follows. DNA binding protein which is involved in the positive regulation of both basal and inducible transcription. Mainly localizes to active promoter sites and interacts with components of various transcription and replication regulatory complexes, such as the ORC, SAGA, THO, TFIID and SWI/SNF complexes. It may therefore regulate transcription by promoting the association of these complexes to their binding sites. The chain is Zinc finger protein 277 from Drosophila melanogaster (Fruit fly).